Consider the following 561-residue polypeptide: Putative cysteine ligase BshC (561 aa).

A coiled-coil region spans residues 472–517 (LAQSVEKVMQSTLNQVENLKSKTIKAEKQRHNDLIAQIEKSRDNLL).

Belongs to the BshC family.

This chain is Putative cysteine ligase BshC, found in Chloroherpeton thalassium (strain ATCC 35110 / GB-78).